The sequence spans 173 residues: Translocon-associated protein subunit delta (173 aa).

A signal peptide spans 1-23 (MAAMASLGALALLLLSSLSRCSA). Over 24-144 (EACLEPQITP…SVDHRGTWNG (121 aa)) the chain is Lumenal. Residues Cys26 and Cys57 are joined by a disulfide bond. Lys73 is covalently cross-linked (Glycyl lysine isopeptide (Lys-Gly) (interchain with G-Cter in ubiquitin)). The chain crosses the membrane as a helical span at residues 145–165 (PWVSTEVLAAAIGLVIYYLAF). Over 166–173 (SAKSHIQA) the chain is Cytoplasmic.

This sequence belongs to the TRAP-delta family. As to quaternary structure, heterotetramer of TRAP-alpha, TRAP-beta, TRAP-delta and TRAP-gamma.

It is found in the endoplasmic reticulum membrane. Its function is as follows. TRAP proteins are part of a complex whose function is to bind calcium to the ER membrane and thereby regulate the retention of ER resident proteins. The chain is Translocon-associated protein subunit delta (SSR4) from Homo sapiens (Human).